The chain runs to 356 residues: 3-isopropylmalate dehydrogenase (356 aa).

Positions 95, 105, 133, and 223 each coordinate substrate. Positions 223, 247, and 251 each coordinate Mg(2+). 281–293 (GSAPDIAGQNKAN) contributes to the NAD(+) binding site.

The protein belongs to the isocitrate and isopropylmalate dehydrogenases family. LeuB type 1 subfamily. In terms of assembly, homodimer. Mg(2+) serves as cofactor. Requires Mn(2+) as cofactor.

The protein localises to the cytoplasm. It catalyses the reaction (2R,3S)-3-isopropylmalate + NAD(+) = 4-methyl-2-oxopentanoate + CO2 + NADH. It participates in amino-acid biosynthesis; L-leucine biosynthesis; L-leucine from 3-methyl-2-oxobutanoate: step 3/4. In terms of biological role, catalyzes the oxidation of 3-carboxy-2-hydroxy-4-methylpentanoate (3-isopropylmalate) to 3-carboxy-4-methyl-2-oxopentanoate. The product decarboxylates to 4-methyl-2 oxopentanoate. The polypeptide is 3-isopropylmalate dehydrogenase (Neisseria meningitidis serogroup A / serotype 4A (strain DSM 15465 / Z2491)).